Reading from the N-terminus, the 523-residue chain is UvrABC system protein C (523 aa).

The 79-residue stretch at 15–93 folds into the GIY-YIG domain; it reads HLPGCYLFKD…IKKHWPRYNI (79 aa). One can recognise a UVR domain in the interval 197-232; sequence RELIESMETEMKEMAAKQMFEQAMELRDEIAALEYL.

The protein belongs to the UvrC family. Interacts with UvrB in an incision complex.

It localises to the cytoplasm. Its function is as follows. The UvrABC repair system catalyzes the recognition and processing of DNA lesions. UvrC both incises the 5' and 3' sides of the lesion. The N-terminal half is responsible for the 3' incision and the C-terminal half is responsible for the 5' incision. In Methanosarcina mazei (strain ATCC BAA-159 / DSM 3647 / Goe1 / Go1 / JCM 11833 / OCM 88) (Methanosarcina frisia), this protein is UvrABC system protein C.